A 377-amino-acid polypeptide reads, in one-letter code: Lactosylceramide 1,3-N-acetyl-beta-D-glucosaminyltransferase B (377 aa).

The Cytoplasmic portion of the chain corresponds to 1 to 13 (MLISARRLRRCQS). A helical; Signal-anchor for type II membrane protein membrane pass occupies residues 14 to 30 (LQLLASCFVLSLMALLV). The Lumenal segment spans residues 31-377 (QEDNSLVNHV…DTYPCSAAWS (347 aa)). 3 N-linked (GlcNAc...) asparagine glycosylation sites follow: N56, N167, and N275.

The protein belongs to the glycosyltransferase 31 family.

The protein localises to the golgi apparatus membrane. The enzyme catalyses a beta-D-Gal-(1-&gt;4)-beta-D-Glc-(1&lt;-&gt;1)-Cer(d18:1(4E)) + UDP-N-acetyl-alpha-D-glucosamine = a beta-D-GlcNAc-(1-&gt;3)-beta-D-Gal-(1-&gt;4)-beta-D-Glc-(1&lt;-&gt;1)-Cer(d18:1(4E)) + UDP + H(+). It carries out the reaction a neolactoside nLc4Cer(d18:1(4E)) + UDP-N-acetyl-alpha-D-glucosamine = a neolactoside IV(3)-beta-GlcNAc-nLc4Cer(d18:1(4E)) + UDP + H(+). Its pathway is protein modification; protein glycosylation. Its function is as follows. Beta-1,3-N-acetylglucosaminyltransferase that plays a key role in the synthesis of lacto- or neolacto-series carbohydrate chains on glycolipids. This Xenopus laevis (African clawed frog) protein is Lactosylceramide 1,3-N-acetyl-beta-D-glucosaminyltransferase B (b3gnt5-b).